Consider the following 310-residue polypeptide: Methionyl-tRNA formyltransferase (310 aa).

Residue 110–113 (SVLP) participates in (6S)-5,6,7,8-tetrahydrofolate binding. The interval 283-310 (TVQPPGKKSMNAADWARGARAEDIRRAR) is disordered. Residues 299–310 (RGARAEDIRRAR) show a composition bias toward basic and acidic residues.

Belongs to the Fmt family.

The enzyme catalyses L-methionyl-tRNA(fMet) + (6R)-10-formyltetrahydrofolate = N-formyl-L-methionyl-tRNA(fMet) + (6S)-5,6,7,8-tetrahydrofolate + H(+). In terms of biological role, attaches a formyl group to the free amino group of methionyl-tRNA(fMet). The formyl group appears to play a dual role in the initiator identity of N-formylmethionyl-tRNA by promoting its recognition by IF2 and preventing the misappropriation of this tRNA by the elongation apparatus. This chain is Methionyl-tRNA formyltransferase, found in Mycolicibacterium gilvum (strain PYR-GCK) (Mycobacterium gilvum (strain PYR-GCK)).